A 147-amino-acid chain; its full sequence is Hemoglobin subunit beta (147 aa).

Val2 carries the N-acetylvaline modification. The region spanning 3 to 147 (HLSGEEKSAV…VANALAHKYH (145 aa)) is the Globin domain. Thr13 bears the Phosphothreonine mark. Ser45 bears the Phosphoserine mark. The residue at position 60 (Lys60) is an N6-acetyllysine. A heme b-binding site is contributed by His64. N6-acetyllysine is present on Lys83. Residue His93 coordinates heme b. Cys94 carries the post-translational modification S-nitrosocysteine. Lys145 carries the N6-acetyllysine modification.

This sequence belongs to the globin family. In terms of assembly, heterotetramer of two alpha chains and two beta chains. As to expression, red blood cells.

Involved in oxygen transport from the lung to the various peripheral tissues. This Lepus europaeus (European hare) protein is Hemoglobin subunit beta (HBB).